We begin with the raw amino-acid sequence, 188 residues long: Elongation factor P (188 aa).

N6-(3,6-diaminohexanoyl)-5-hydroxylysine is present on lysine 34.

The protein belongs to the elongation factor P family. Post-translationally, may be beta-lysylated on the epsilon-amino group of Lys-34 by the combined action of EpmA and EpmB, and then hydroxylated on the C5 position of the same residue by EpmC (if this protein is present). Lysylation is critical for the stimulatory effect of EF-P on peptide-bond formation. The lysylation moiety may extend toward the peptidyltransferase center and stabilize the terminal 3-CCA end of the tRNA. Hydroxylation of the C5 position on Lys-34 may allow additional potential stabilizing hydrogen-bond interactions with the P-tRNA.

Its subcellular location is the cytoplasm. It functions in the pathway protein biosynthesis; polypeptide chain elongation. Its function is as follows. Involved in peptide bond synthesis. Alleviates ribosome stalling that occurs when 3 or more consecutive Pro residues or the sequence PPG is present in a protein, possibly by augmenting the peptidyl transferase activity of the ribosome. Modification of Lys-34 is required for alleviation. The protein is Elongation factor P of Haemophilus influenzae (strain PittGG).